The sequence spans 493 residues: Trigger factor (493 aa).

A PPIase FKBP-type domain is found at Gly-162–Pro-243. The segment at Glu-432–Ile-493 is disordered. Residues His-449–Asp-470 show a composition bias toward basic and acidic residues. Residues Ala-474–Ala-485 show a composition bias toward low complexity.

The protein belongs to the FKBP-type PPIase family. Tig subfamily.

The protein resides in the cytoplasm. The catalysed reaction is [protein]-peptidylproline (omega=180) = [protein]-peptidylproline (omega=0). Its function is as follows. Involved in protein export. Acts as a chaperone by maintaining the newly synthesized protein in an open conformation. Functions as a peptidyl-prolyl cis-trans isomerase. The chain is Trigger factor from Frankia alni (strain DSM 45986 / CECT 9034 / ACN14a).